The primary structure comprises 692 residues: Elongation factor G (692 aa).

The tr-type G domain occupies 8-283 (EDYRNFGIMA…AVVDYLPSPV (276 aa)). GTP-binding positions include 17–24 (AHIDAGKT), 81–85 (DTPGH), and 135–138 (NKMD).

It belongs to the TRAFAC class translation factor GTPase superfamily. Classic translation factor GTPase family. EF-G/EF-2 subfamily.

The protein resides in the cytoplasm. Catalyzes the GTP-dependent ribosomal translocation step during translation elongation. During this step, the ribosome changes from the pre-translocational (PRE) to the post-translocational (POST) state as the newly formed A-site-bound peptidyl-tRNA and P-site-bound deacylated tRNA move to the P and E sites, respectively. Catalyzes the coordinated movement of the two tRNA molecules, the mRNA and conformational changes in the ribosome. The polypeptide is Elongation factor G (Caulobacter vibrioides (strain ATCC 19089 / CIP 103742 / CB 15) (Caulobacter crescentus)).